Reading from the N-terminus, the 393-residue chain is MATGGSGGGGGGGGGGDDVHGLKFGKKIYFEQDAAASASAAAVESSSTSSGGGGKKGKGVAAAAAPPPPLPPRCQVEGCGVDLSGVKPYYCRHKVCYMHAKEPIVVVAGLEQRFCQQCSRFHQLPEFDQEKKSCRRRLAGHNERRRKPTPGPLSSRYGRLAASFHEEPGRSRSFVVDFSYPRVPSSVRDAWPAIQPSDRMSGSIQWQGGHELHPHRSAVAGYSDHHAFSSHGGSAAGAPMLHHPAFELTSGGCLAGVATDSSCALSLLSTQPWDTTQSTSSHNRSPPMSSTASAFGGGNNPVSPSVMASNYMAASPGWNSSSRGHDGARNVHLPPPHGVVLNEVPPGSVHHGHFSGELELALQGGAPSNRPEAEHGSGSGAFSHSTNAMNWSL.

Positions 40-49 are enriched in low complexity; it reads AAAVESSSTS. Residues 40-67 are disordered; it reads AAAVESSSTSSGGGGKKGKGVAAAAAPP. The segment at 71–148 adopts an SBP-type zinc-finger fold; that stretch reads PPRCQVEGCG…AGHNERRRKP (78 aa). Cys-74, Cys-79, Cys-96, His-99, Cys-115, Cys-118, His-122, and Cys-134 together coordinate Zn(2+). The Bipartite nuclear localization signal motif lies at 131–147; that stretch reads KKSCRRRLAGHNERRRK. A compositionally biased stretch (basic residues) spans 137–148; the sequence is RLAGHNERRRKP. Disordered stretches follow at residues 137-158, 273-301, and 317-393; these read RLAG…SRYG, WDTT…GNNP, and GWNS…NWSL. Composition is skewed to polar residues over residues 273–293 and 380–393; these read WDTT…STAS and GAFS…NWSL.

Expressed in young panicles.

It is found in the nucleus. Trans-acting factor that binds specifically to the consensus nucleotide sequence 5'-TNCGTACAA-3'. May be involved in panicle development. The polypeptide is Squamosa promoter-binding-like protein 17 (SPL17) (Oryza sativa subsp. japonica (Rice)).